The sequence spans 202 residues: Potassium-transporting ATPase KdpC subunit 1 (202 aa).

Residues 17 to 37 (LWVIAAVIYPFFMIAVGQIVF) form a helical membrane-spanning segment.

The protein belongs to the KdpC family. As to quaternary structure, the system is composed of three essential subunits: KdpA, KdpB and KdpC.

The protein localises to the cell inner membrane. Part of the high-affinity ATP-driven potassium transport (or Kdp) system, which catalyzes the hydrolysis of ATP coupled with the electrogenic transport of potassium into the cytoplasm. This subunit acts as a catalytic chaperone that increases the ATP-binding affinity of the ATP-hydrolyzing subunit KdpB by the formation of a transient KdpB/KdpC/ATP ternary complex. The sequence is that of Potassium-transporting ATPase KdpC subunit 1 from Nostoc sp. (strain PCC 7120 / SAG 25.82 / UTEX 2576).